Here is a 163-residue protein sequence, read N- to C-terminus: Nucleotide-binding protein CJE0423 (163 aa).

Belongs to the YajQ family.

In terms of biological role, nucleotide-binding protein. In Campylobacter jejuni (strain RM1221), this protein is Nucleotide-binding protein CJE0423.